Reading from the N-terminus, the 1345-residue chain is Probable membrane antigen 75 (1345 aa).

The protein resides in the virion tegument. In Equine herpesvirus 2 (strain 86/87) (EHV-2), this protein is Probable membrane antigen 75 (75).